A 262-amino-acid chain; its full sequence is tRNA U34 carboxymethyltransferase (262 aa).

Residues Lys25, Trp39, Lys44, Gly63, Val114–Glu115, Tyr135, and Arg250 each bind carboxy-S-adenosyl-L-methionine.

The protein belongs to the class I-like SAM-binding methyltransferase superfamily. CmoB family. In terms of assembly, homotetramer.

It catalyses the reaction carboxy-S-adenosyl-L-methionine + 5-hydroxyuridine(34) in tRNA = 5-carboxymethoxyuridine(34) in tRNA + S-adenosyl-L-homocysteine + H(+). Catalyzes carboxymethyl transfer from carboxy-S-adenosyl-L-methionine (Cx-SAM) to 5-hydroxyuridine (ho5U) to form 5-carboxymethoxyuridine (cmo5U) at position 34 in tRNAs. This chain is tRNA U34 carboxymethyltransferase, found in Helicobacter acinonychis (strain Sheeba).